We begin with the raw amino-acid sequence, 1088 residues long: MGKYNLILSEYLSFVYNSQSAVQIPIYYSSNSELEKRCIEFHAKCVDSSKKGLSLKSLFEEYKDVIDNATLLSILSYSYDKYNAVERKLVNYAKGKPLEADLTANEIDYENNKITSELFQSAEEYTDSLMDPAILTSLSSNLNAVMFWLERHSNDVADANKIYKRRLDLFTIVASTINKYGVPRHNEKYRYEYEVMKDKPYYLVTWANSSIEMLMSVFSHEDYLIAKELIILSYSNRSTLAKLVSSPMSILVALIDINGTFITNEELELEFSDKYIKAIVPDQIFDELQEMIDNMRKAGLVDIPRMIQEWLVDCSLEKFTLMSKIYSWSFHVGFRKQKMIDAALDQLKTEYTEDVDGEMYNEYTMLIRDEIVKMLEVPVKHDDHLLRDSELAGLLSMSSASNGESRQLKFGRKTIFSTKKNMHVMDDIAHGRYTPGVIPPVNVDRPIPLGRRDVPGRRTRIIFILPYEYFIAQHAVVEKMLSYAKHTREYAEFYSQSNQLLSYGDVTRFLSSNSMVLYTDVSQWDSSQHNTQPFRKGIIMGLDMLSNMTNDPKVVQTLNLYKQTQINLMDSYVQIPDGNVIKKIQYGAVASGEKQTKAANSIANLALIKTVLSRIANKYSFITKIIRVDGDDNYAVLQFNTDVTKQMVQDVSNDVRYIYSRMNAKVKALVSTVGIEIAKRYIAGGKIFFRAGINLLNNEKRGQSTQWDQAAILYSNYIVNKLRGFETDREFILTKIIQMTSVAITGSLRLFPSERVLTTNSTFKVFDSEDFIIEYGTTNDEVYIQRAFMSLSSQKSGIADEIASSQTFKNYVNKLSDQLLISKNVIVSKGIAVTEKAKLNSYAPVYLEKRRAQISALLTMLQKPVSFKSNKITINDILRDIKPFFVTSEANLPIQYRKFMPTLPNNVQYVIQCIGSRTYQIEDSGSKSSISKLISKYSVYKPSIEELYKVISLREQEIQLYLVSLGVPPVDASTYVGSRIYSQDKYKILESYVYNLLSINYGCYQLFDFNSPDLEKLIRIPFKGKIPAVTFILHLYAKLEIINYAIKNGAWISLFCNYPKSEMIKLWKKMWNITALRSPYTSANFFQD.

Residues 501–687 (LSYGDVTRFL…AKRYIAGGKI (187 aa)) enclose the RdRp catalytic domain.

The protein belongs to the reoviridae RNA-directed RNA polymerase family. Interacts with VP3 (Potential). Interacts with VP2; this interaction activates VP1. Interacts with NSP5; this interaction is probably necessary for the formation of functional virus factories. Interacts with NSP2; this interaction is weak. The cofactor is Mg(2+).

The protein resides in the virion. The catalysed reaction is RNA(n) + a ribonucleoside 5'-triphosphate = RNA(n+1) + diphosphate. Functionally, RNA-directed RNA polymerase that is involved in both transcription and genome replication. Together with VP3 capping enzyme, forms an enzyme complex positioned near the channels situated at each of the five-fold vertices of the core. Following infection, the outermost layer of the virus is lost, leaving a double-layered particle (DLP) made up of the core and VP6 shell. VP1 then catalyzes the transcription of fully conservative plus-strand genomic RNAs that are extruded through the DLP's channels into the cytoplasm where they function as mRNAs for translation of viral proteins. One copy of each of the viral (+)RNAs is also recruited during core assembly, together with newly synthesized polymerase complexes and VP2. The polymerase of these novo-formed particles catalyzes the synthesis of complementary minus-strands leading to dsRNA formation. To do so, the polymerase specifically recognizes and binds 4 bases 5'-UGUG-3' in the conserved 3'-sequence of plus-strand RNA templates. VP2 presumably activates the autoinhibited VP1-RNA complex to coordinate packaging and genome replication. Once dsRNA synthesis is complete, the polymerase switches to the transcriptional mode, thus providing secondary transcription. The chain is RNA-directed RNA polymerase from Rotavirus A (isolate RVA/Human/United States/WI61/1983/G9P1A[8]) (RV-A).